The following is a 371-amino-acid chain: 2-aminoethylphosphonate--pyruvate transaminase (371 aa).

Position 198 is an N6-(pyridoxal phosphate)lysine (K198).

This sequence belongs to the class-V pyridoxal-phosphate-dependent aminotransferase family. PhnW subfamily. As to quaternary structure, homodimer. Pyridoxal 5'-phosphate serves as cofactor.

It carries out the reaction (2-aminoethyl)phosphonate + pyruvate = phosphonoacetaldehyde + L-alanine. Involved in phosphonate degradation. This Syntrophobacter fumaroxidans (strain DSM 10017 / MPOB) protein is 2-aminoethylphosphonate--pyruvate transaminase.